We begin with the raw amino-acid sequence, 716 residues long: Polyribonucleotide nucleotidyltransferase (716 aa).

Mg(2+)-binding residues include Asp-490 and Asp-496. Positions 556–615 (PKIETLTIPTDKIREVIGSGGKVIREIVETSGAKVDINDDGVIKIASNDQAAIKKAYDMI) constitute a KH domain. Residues 625–693 (GQIYTGKVVK…ERGKVRLGMK (69 aa)) form the S1 motif domain. Residues 695–716 (VDQETGQEIQPEKKEKEEAGEA) are disordered. The segment covering 704-716 (QPEKKEKEEAGEA) has biased composition (basic and acidic residues).

This sequence belongs to the polyribonucleotide nucleotidyltransferase family. Requires Mg(2+) as cofactor.

It localises to the cytoplasm. It catalyses the reaction RNA(n+1) + phosphate = RNA(n) + a ribonucleoside 5'-diphosphate. Involved in mRNA degradation. Catalyzes the phosphorolysis of single-stranded polyribonucleotides processively in the 3'- to 5'-direction. This is Polyribonucleotide nucleotidyltransferase from Cereibacter sphaeroides (strain ATCC 17029 / ATH 2.4.9) (Rhodobacter sphaeroides).